A 728-amino-acid chain; its full sequence is Rho-related BTB domain-containing protein 2 (728 aa).

Residues 1–210 are rho-like; that stretch reads MDSDMDYERP…DNAIRAALIS (210 aa). Residues 21-28, 84-88, and 140-143 contribute to the GTP site; these read GDNAVGKT, DTFGD, and CQLD. 2 BTB domains span residues 266–333 and 500–567; these read ADVI…HHHH and SDVT…TSSP. Residues 304–313 show a composition bias toward gly residues; the sequence is ELGGPSGSGG. The segment at 304–333 is disordered; sequence ELGGPSGSGGPRPEDHRSHPEQHHHHHHHH. The span at 315-324 shows a compositional bias: basic and acidic residues; it reads RPEDHRSHPE. The disordered stretch occupies residues 703-728; it reads FWNSPSSPSSSAAGSASPSSSSSAVV. The span at 706-728 shows a compositional bias: low complexity; the sequence is SPSSPSSSAAGSASPSSSSSAVV.

The protein belongs to the small GTPase superfamily. Rho family. In terms of assembly, interacts with HSP90AA1 and HSP90AB1. Forms a complex with CUL3 and RBX1. Interacts (via BTB 1 domain) with CUL3. Interacts with MSI2. Autoubiquitinated by RHOBTB2-CUL3-RBX1 ubiquitin ligase complex. In terms of tissue distribution, expressed in most tissues, with highest expression in brain.

Functionally, regulator of cell proliferation and apoptosis. It likely functions as a substrate-adapter that recruits key substrates, e.g. MSI2, to CUL3-based ubiquitin ligase complexes for degradation. Required for MSI2 ubiquitination and degradation. This chain is Rho-related BTB domain-containing protein 2 (Rhobtb2), found in Mus musculus (Mouse).